Here is a 103-residue protein sequence, read N- to C-terminus: Cytotoxin-like protein TA-BMBGT3 (103 aa).

An N-terminal signal peptide occupies residues 1–21 (MKTLLLTLVVVTIICLDLGYT). Intrachain disulfides connect C24–C45, C27–C37, C38–C72, C76–C90, and C91–C96.

This sequence belongs to the three-finger toxin family. Ancestral subfamily. Orphan group XVII sub-subfamily. As to expression, expressed by the venom gland.

The protein localises to the secreted. The polypeptide is Cytotoxin-like protein TA-BMBGT3 (Bungarus multicinctus (Many-banded krait)).